Here is a 280-residue protein sequence, read N- to C-terminus: Meiotic spindle formation protein 2 (280 aa).

The disordered stretch occupies residues 1 to 104 (MSGLDDRKKL…LPKSSPESSV (104 aa)). Residues 72-92 (LHSESKKELSRNPVSRGEEHS) show a composition bias toward basic and acidic residues. The segment covering 93 to 104 (SSLPKSSPESSV) has biased composition (low complexity).

As to quaternary structure, interacts with mei-1.

It localises to the cytoplasm. Its subcellular location is the cytoskeleton. The protein resides in the spindle pole. Forms a heterodimeric complex in conjunction with mei-1 which severs microtubules in vitro in an ATP-dependent manner. This activity may promote rapid reorganization of cellular microtubule arrays. May act to target mei-1 within the cell. Required specifically for meiotic spindle formation in the female germline. The polypeptide is Meiotic spindle formation protein 2 (mei-2) (Caenorhabditis elegans).